The following is a 471-amino-acid chain: Isochorismate synthase MenF (471 aa).

Lys-226 acts as the Proton acceptor in catalysis. The active-site Proton donor is the Glu-275. 2 residues coordinate Mg(2+): Glu-319 and Glu-454.

Belongs to the isochorismate synthase family. The cofactor is Mg(2+).

It catalyses the reaction chorismate = isochorismate. It functions in the pathway quinol/quinone metabolism; 1,4-dihydroxy-2-naphthoate biosynthesis; 1,4-dihydroxy-2-naphthoate from chorismate: step 1/7. The protein operates within quinol/quinone metabolism; menaquinone biosynthesis. In terms of biological role, catalyzes the conversion of chorismate to isochorismate. The chain is Isochorismate synthase MenF from Bacillus subtilis (strain 168).